Reading from the N-terminus, the 115-residue chain is SOSS complex subunit C homolog (115 aa).

This sequence belongs to the SOSS-C family.

The polypeptide is SOSS complex subunit C homolog (Drosophila mojavensis (Fruit fly)).